A 60-amino-acid chain; its full sequence is Large ribosomal subunit protein bL32 (60 aa).

The segment at 1–60 (MAVQQNKKSRSARDMRRSHDALSENALSVEKTTGEVHLRHHVSPEGVYRGRKVVDKGADE) is disordered. A compositionally biased stretch (basic and acidic residues) spans 11 to 22 (SARDMRRSHDAL).

Belongs to the bacterial ribosomal protein bL32 family.

The protein is Large ribosomal subunit protein bL32 of Pseudomonas putida (strain ATCC 700007 / DSM 6899 / JCM 31910 / BCRC 17059 / LMG 24140 / F1).